Reading from the N-terminus, the 206-residue chain is Isochorismatase family protein 1B (206 aa).

Belongs to the isochorismatase family.

This chain is Isochorismatase family protein 1B, found in Dictyostelium discoideum (Social amoeba).